Reading from the N-terminus, the 1352-residue chain is Alpha-protein kinase 1 (1352 aa).

An Arf-GAP domain is found at Asp-7–Asp-127. The C4-type zinc finger occupies Cys-25–Cys-48. Disordered regions lie at residues Leu-123–Asn-164, Thr-219–His-380, Gln-424–Pro-445, His-457–Ser-484, Phe-503–Ser-560, and Ile-619–Asn-658. Positions Gly-237–Ser-246 are enriched in polar residues. 2 stretches are compositionally biased toward low complexity: residues Asn-268–Asn-287 and Asn-298–Asn-318. Composition is skewed to polar residues over residues Lys-329–Ser-352 and His-359–His-379. Residues Thr-393 to Ser-429 are a coiled coil. Composition is skewed to basic residues over residues Asn-458–Gln-470 and His-510–Ser-523. Residues Ile-619–Asn-636 show a composition bias toward low complexity. Positions Tyr-689–Leu-781 form a coiled coil. Disordered regions lie at residues Pro-786–Asp-863 and Thr-901–Arg-979. Residues Pro-799–Tyr-812 show a composition bias toward polar residues. Residues Gln-821–Ser-859 are compositionally biased toward low complexity. The segment covering Gln-906–Val-915 has biased composition (pro residues). Residues Gln-931–Pro-965 show a composition bias toward low complexity. Residues Arg-990–Val-1194 form the Alpha-type protein kinase domain. ATP is bound at residue Gly-1164–Gly-1169. Disordered stretches follow at residues Pro-1198–Phe-1234 and Gln-1279–Ser-1352. The stretch at His-1241–Gly-1320 forms a coiled coil. Residues Gln-1279–Asn-1319 are compositionally biased toward low complexity. Pro residues predominate over residues His-1321–Pro-1332. The span at Gln-1334–Ser-1352 shows a compositional bias: basic and acidic residues.

The protein belongs to the protein kinase superfamily. Alpha-type protein kinase family. ALPK subfamily.

This Dictyostelium discoideum (Social amoeba) protein is Alpha-protein kinase 1 (ak1).